The sequence spans 273 residues: Fos-related antigen 1 (273 aa).

Disordered regions lie at residues 1-46 (MYRD…IDSS) and 60-114 (GPTG…RRER). Residues 7–35 (EPGPSSGAGSPYGRPAQPPQAQAQTAQQQ) are compositionally biased toward low complexity. Residues 105–168 (EERRRVRRER…ERLELVLEAH (64 aa)) enclose the bZIP domain. The segment at 107–127 (RRRVRRERNKLAAAKCRNRRK) is basic motif. The segment at 133 to 161 (LQAETDKLEDEKSGLQREIEELQKQKERL) is leucine-zipper. A compositionally biased stretch (basic and acidic residues) spans 169–182 (RPICKIPEGDKKDP). Positions 169-273 (RPICKIPEGD…PLGSPTLLAL (105 aa)) are disordered. 2 stretches are compositionally biased toward low complexity: residues 217–235 (LHTP…TPSL) and 254–273 (SSSS…LLAL). Residue S267 is modified to Phosphoserine.

This sequence belongs to the bZIP family. Fos subfamily. Heterodimer. Interacts with the BAF multiprotein chromatin-remodeling complex subunits SMARCB1 and SMARCD1. Interacts with ARID1A and JUN.

It is found in the nucleus. The protein is Fos-related antigen 1 (Fosl1) of Mus musculus (Mouse).